Reading from the N-terminus, the 128-residue chain is MPTIQQLIRRGRKTKASKTASPALERCPQKRGVCTRVYTTTPKKPNSALRKVARVRLSNKIEVTAYIPGEGHNLQEHSIVLIRGGRVKDLPGVRYHIVRGSLDTSGVADRRNSRSKYGAKRPKEAAAK.

The segment at 1–25 is disordered; that stretch reads MPTIQQLIRRGRKTKASKTASPALE. A 3-methylthioaspartic acid modification is found at D89. The segment at 101–128 is disordered; sequence SLDTSGVADRRNSRSKYGAKRPKEAAAK.

This sequence belongs to the universal ribosomal protein uS12 family. Part of the 30S ribosomal subunit. Contacts proteins S8 and S17. May interact with IF1 in the 30S initiation complex.

With S4 and S5 plays an important role in translational accuracy. In terms of biological role, interacts with and stabilizes bases of the 16S rRNA that are involved in tRNA selection in the A site and with the mRNA backbone. Located at the interface of the 30S and 50S subunits, it traverses the body of the 30S subunit contacting proteins on the other side and probably holding the rRNA structure together. The combined cluster of proteins S8, S12 and S17 appears to hold together the shoulder and platform of the 30S subunit. The polypeptide is Small ribosomal subunit protein uS12 (Chlorobium phaeobacteroides (strain BS1)).